Consider the following 368-residue polypeptide: Histidinol-phosphate aminotransferase (368 aa).

K223 carries the N6-(pyridoxal phosphate)lysine modification.

It belongs to the class-II pyridoxal-phosphate-dependent aminotransferase family. Histidinol-phosphate aminotransferase subfamily. Homodimer. It depends on pyridoxal 5'-phosphate as a cofactor.

It catalyses the reaction L-histidinol phosphate + 2-oxoglutarate = 3-(imidazol-4-yl)-2-oxopropyl phosphate + L-glutamate. Its pathway is amino-acid biosynthesis; L-histidine biosynthesis; L-histidine from 5-phospho-alpha-D-ribose 1-diphosphate: step 7/9. This is Histidinol-phosphate aminotransferase (hisC) from Sinorhizobium fredii (strain NBRC 101917 / NGR234).